Here is a 434-residue protein sequence, read N- to C-terminus: N-lysine methyltransferase SMYD2-B (434 aa).

In terms of domain architecture, SET spans Pro8–Ile242. Lys18–Arg20 is an S-adenosyl-L-methionine binding site. Positions 53, 56, 66, 69, 75, 79, 87, and 91 each coordinate Zn(2+). The MYND-type zinc finger occupies Cys53–Cys91. S-adenosyl-L-methionine is bound by residues His138, Asn207–His208, and Tyr259–Phe261.

This sequence belongs to the class V-like SAM-binding methyltransferase superfamily.

Its subcellular location is the cytoplasm. It is found in the cytosol. The protein localises to the nucleus. It carries out the reaction L-lysyl(4)-[histone H3] + 3 S-adenosyl-L-methionine = N(6),N(6),N(6)-trimethyl-L-lysyl(4)-[histone H3] + 3 S-adenosyl-L-homocysteine + 3 H(+). The enzyme catalyses L-lysyl-[protein] + S-adenosyl-L-methionine = N(6)-methyl-L-lysyl-[protein] + S-adenosyl-L-homocysteine + H(+). Its function is as follows. Protein-lysine N-methyltransferase that methylates both histones and non-histone proteins, including p53/TP53 and RB1. Specifically trimethylates histone H3 'Lys-4' (H3K4me3) in vivo. The activity requires interaction with HSP90alpha. Shows even higher methyltransferase activity on p53/TP53. Monomethylates 'Lys-370' of p53/TP53, leading to decreased DNA-binding activity and subsequent transcriptional regulation activity of p53/TP53. Monomethylates RB1 at 'Lys-860'. The sequence is that of N-lysine methyltransferase SMYD2-B (smyd2b) from Danio rerio (Zebrafish).